A 417-amino-acid polypeptide reads, in one-letter code: Serine hydroxymethyltransferase (417 aa).

Residues L120 and 124 to 126 (GHL) contribute to the (6S)-5,6,7,8-tetrahydrofolate site. K229 carries the post-translational modification N6-(pyridoxal phosphate)lysine.

It belongs to the SHMT family. As to quaternary structure, homodimer. Requires pyridoxal 5'-phosphate as cofactor.

It is found in the cytoplasm. The catalysed reaction is (6R)-5,10-methylene-5,6,7,8-tetrahydrofolate + glycine + H2O = (6S)-5,6,7,8-tetrahydrofolate + L-serine. It participates in one-carbon metabolism; tetrahydrofolate interconversion. Its pathway is amino-acid biosynthesis; glycine biosynthesis; glycine from L-serine: step 1/1. In terms of biological role, catalyzes the reversible interconversion of serine and glycine with tetrahydrofolate (THF) serving as the one-carbon carrier. This reaction serves as the major source of one-carbon groups required for the biosynthesis of purines, thymidylate, methionine, and other important biomolecules. Also exhibits THF-independent aldolase activity toward beta-hydroxyamino acids, producing glycine and aldehydes, via a retro-aldol mechanism. The sequence is that of Serine hydroxymethyltransferase from Anaeromyxobacter dehalogenans (strain 2CP-1 / ATCC BAA-258).